The sequence spans 251 residues: Pyrroloquinoline-quinone synthase (251 aa).

The protein belongs to the PqqC family.

The catalysed reaction is 6-(2-amino-2-carboxyethyl)-7,8-dioxo-1,2,3,4,7,8-hexahydroquinoline-2,4-dicarboxylate + 3 O2 = pyrroloquinoline quinone + 2 H2O2 + 2 H2O + H(+). It functions in the pathway cofactor biosynthesis; pyrroloquinoline quinone biosynthesis. In terms of biological role, ring cyclization and eight-electron oxidation of 3a-(2-amino-2-carboxyethyl)-4,5-dioxo-4,5,6,7,8,9-hexahydroquinoline-7,9-dicarboxylic-acid to PQQ. This Pseudomonas putida (strain ATCC 700007 / DSM 6899 / JCM 31910 / BCRC 17059 / LMG 24140 / F1) protein is Pyrroloquinoline-quinone synthase.